The following is a 607-amino-acid chain: Elongation factor 4 (607 aa).

The tr-type G domain maps to 11–193 (SKIRNFSIIA…QIVEKVPAPT (183 aa)). GTP-binding positions include 23–28 (DHGKST) and 140–143 (NKID).

Belongs to the TRAFAC class translation factor GTPase superfamily. Classic translation factor GTPase family. LepA subfamily.

The protein localises to the cell membrane. It catalyses the reaction GTP + H2O = GDP + phosphate + H(+). In terms of biological role, required for accurate and efficient protein synthesis under certain stress conditions. May act as a fidelity factor of the translation reaction, by catalyzing a one-codon backward translocation of tRNAs on improperly translocated ribosomes. Back-translocation proceeds from a post-translocation (POST) complex to a pre-translocation (PRE) complex, thus giving elongation factor G a second chance to translocate the tRNAs correctly. Binds to ribosomes in a GTP-dependent manner. This chain is Elongation factor 4, found in Bacillus mycoides (strain KBAB4) (Bacillus weihenstephanensis).